We begin with the raw amino-acid sequence, 344 residues long: Envelope glycoprotein M (344 aa).

Residues 1–12 (MASSRVDTINLR) lie on the Intravirion side of the membrane. A helical membrane pass occupies residues 13-33 (IWLVSIICAALSFINVTVHLI). Topologically, residues 34–76 (AINFPNLGFPCAYFEINDLKAVNLSANNEIYQMTHQLYINPVQ) are virion surface. The helical transmembrane segment at 77 to 97 (IICYVLIMAILFLLIIIYYIV) threads the bilayer. Over 98-125 (CCAKVFSSNKTSNVNQTTRDITWMGDTS) the chain is Intravirion. A helical transmembrane segment spans residues 126-146 (SCFQFILIMDTFQLFVTALSF). R147 is a topological domain (virion surface). A helical membrane pass occupies residues 148–168 (LVALGAFAYSIFFVCFTTFNV). Topologically, residues 169-203 (TLITQFQSADKSFFAFQKIHPNLKGTVQFKTVVIN) are intravirion. Residues 204–224 (LSELMLGYSTMFLGITTCLGV) form a helical membrane-spanning segment. Over 225–238 (GNSIYIRSITVAFS) the chain is Virion surface. A helical membrane pass occupies residues 239–259 (SINTFLVMACIYSIVIEAVLV). Topologically, residues 260 to 263 (RYVK) are intravirion. Residues 264–284 (PLFGYYVGMFCGAVGLSFPIL) form a helical membrane-spanning segment. Topologically, residues 285 to 293 (QYETFFESE) are virion surface. Residues 294–314 (WSTGLIINLSVVAIISIGFII) form a helical membrane-spanning segment. At 315-344 (CRLVRYLVKKKRRYKQLLNAESSSLMDENE) the chain is on the intravirion side.

This sequence belongs to the herpesviridae glycoprotein M family. In terms of assembly, interacts (via N-terminus) with gN (via N-terminus). The gM-gN heterodimer forms the gCII complex.

It localises to the virion membrane. Its subcellular location is the host Golgi apparatus. The protein resides in the host trans-Golgi network. It is found in the host endosome membrane. The protein localises to the host nucleus inner membrane. Its function is as follows. Envelope glycoprotein important for virion assembly and egress. Plays a role in the correct incorporation of gH-gL into virion membrane. Directs the glycoprotein N (gN) to the host trans-Golgi network. The sequence is that of Envelope glycoprotein M from Homo sapiens (Human).